A 223-amino-acid chain; its full sequence is Small ribosomal subunit protein uS3 (223 aa).

Positions 40-108 (IRELVHRELP…KVHLNIQEIR (69 aa)) constitute a KH type-2 domain.

It belongs to the universal ribosomal protein uS3 family. In terms of assembly, part of the 30S ribosomal subunit. Forms a tight complex with proteins S10 and S14.

In terms of biological role, binds the lower part of the 30S subunit head. Binds mRNA in the 70S ribosome, positioning it for translation. This chain is Small ribosomal subunit protein uS3, found in Thermomicrobium roseum (strain ATCC 27502 / DSM 5159 / P-2).